We begin with the raw amino-acid sequence, 93 residues long: Small ribosomal subunit protein uS19 (93 aa).

This sequence belongs to the universal ribosomal protein uS19 family.

Functionally, protein S19 forms a complex with S13 that binds strongly to the 16S ribosomal RNA. The polypeptide is Small ribosomal subunit protein uS19 (Leuconostoc citreum (strain KM20)).